Reading from the N-terminus, the 196-residue chain is Chloroplastic ATP-dependent Clp protease proteolytic subunit 1 (196 aa).

Ser101 (nucleophile) is an active-site residue. Residue His126 is part of the active site.

Belongs to the peptidase S14 family. Component of the chloroplastic Clp protease core complex which consist of at least 16 proteins: CLPP4 (3 copies), CLPP5 (3 copies), CLPR4 (2 copies), ClpP1 (1 copy), CLPP6 (1 copy), CLPR2 (1 copy), CLPT1 (1 copy), CLPT2 (1 copy) and 3 copies of CLPP3 and/or CLPR1 and/or CLPR3. The core complex is organized in two heptameric rings, one containing CLPP3,4,5,6 in a 1:2:3:1 ratio and the other CLPP1 and CLPR1,2,3,4 in a 3:1:1:1:1 ratio. Mostly expressed in leaves. Also detected in stems, and to a lower extent, in roots (at protein level).

The protein localises to the plastid. It localises to the chloroplast stroma. The enzyme catalyses Hydrolysis of proteins to small peptides in the presence of ATP and magnesium. alpha-casein is the usual test substrate. In the absence of ATP, only oligopeptides shorter than five residues are hydrolyzed (such as succinyl-Leu-Tyr-|-NHMec, and Leu-Tyr-Leu-|-Tyr-Trp, in which cleavage of the -Tyr-|-Leu- and -Tyr-|-Trp bonds also occurs).. Functionally, cleaves peptides in various proteins in a process that requires ATP hydrolysis. Has a chymotrypsin-like activity. Plays a major role in the degradation of misfolded proteins. The protein is Chloroplastic ATP-dependent Clp protease proteolytic subunit 1 of Arabidopsis thaliana (Mouse-ear cress).